Here is a 145-residue protein sequence, read N- to C-terminus: UI (145 aa).

The signal sequence occupies residues 1–22 (MKPVPLVLLITSVLLTTHIPLS). V143 carries the valine amide modification.

This sequence belongs to the sauvagine/corticotropin-releasing factor/urotensin I family.

It is found in the secreted. Its function is as follows. Urotensin is found in the teleost caudal neurosecretory system. It has a suggested role in osmoregulation and as a corticotropin-releasing factor. The non-hormonal portion of this precursor may be a urotensin binding protein, urophysin. This is UI from Carassius auratus (Goldfish).